The sequence spans 333 residues: Biotin synthase (333 aa).

The 234-residue stretch at 54–287 (ANHGAIHACS…TKIIKFAAGR (234 aa)) folds into the Radical SAM core domain. [4Fe-4S] cluster contacts are provided by C72, C76, and C79. The [2Fe-2S] cluster site is built by C151, C212, and K282.

It belongs to the radical SAM superfamily. Biotin synthase family. Homodimer. The cofactor is [4Fe-4S] cluster. [2Fe-2S] cluster serves as cofactor.

The enzyme catalyses (4R,5S)-dethiobiotin + (sulfur carrier)-SH + 2 reduced [2Fe-2S]-[ferredoxin] + 2 S-adenosyl-L-methionine = (sulfur carrier)-H + biotin + 2 5'-deoxyadenosine + 2 L-methionine + 2 oxidized [2Fe-2S]-[ferredoxin]. It functions in the pathway cofactor biosynthesis; biotin biosynthesis; biotin from 7,8-diaminononanoate: step 2/2. In terms of biological role, catalyzes the conversion of dethiobiotin (DTB) to biotin by the insertion of a sulfur atom into dethiobiotin via a radical-based mechanism. This chain is Biotin synthase, found in Chlorobaculum tepidum (strain ATCC 49652 / DSM 12025 / NBRC 103806 / TLS) (Chlorobium tepidum).